Reading from the N-terminus, the 66-residue chain is UPF0434 protein Nwi_0075 (66 aa).

It belongs to the UPF0434 family.

The chain is UPF0434 protein Nwi_0075 from Nitrobacter winogradskyi (strain ATCC 25391 / DSM 10237 / CIP 104748 / NCIMB 11846 / Nb-255).